Consider the following 214-residue polypeptide: Large ribosomal subunit protein uL3 (214 aa).

Residues 133–153 (GRATHGNSRSHNVPGSIGMAQ) form a disordered region. Position 153 is an N5-methylglutamine (glutamine 153).

It belongs to the universal ribosomal protein uL3 family. Part of the 50S ribosomal subunit. Forms a cluster with proteins L14 and L19. In terms of processing, methylated by PrmB.

Functionally, one of the primary rRNA binding proteins, it binds directly near the 3'-end of the 23S rRNA, where it nucleates assembly of the 50S subunit. This chain is Large ribosomal subunit protein uL3, found in Cupriavidus metallidurans (strain ATCC 43123 / DSM 2839 / NBRC 102507 / CH34) (Ralstonia metallidurans).